Reading from the N-terminus, the 291-residue chain is MKSSILLDGKAISEKIRNRIQETLAKAKAEGKGIPTLATILVGNNPASETYVNMKVKACEKVGMHSRYIRLKEETTTEELLGEIRKLNLDPSINGILLQHPVPHQIDERKAFDEIALEKDVDGVTTISFGKLSMNSEAYYPCTPYGMVLLLQEYGIDVTGKHAVVVGRSPILGKPMAIMLTNLNATVTLCHSKTEDLPSLVKQADIIVGAVGKPEFIKAEWMKEGVVILDAGYNVGNVGDIEVSKAKDKSSYYTPVPGGVGPMTISVLLLQTMYSFLGQFSPKLESHVANR.

NADP(+) contacts are provided by residues 167-169 (GRS) and Ser-192.

This sequence belongs to the tetrahydrofolate dehydrogenase/cyclohydrolase family. Homodimer.

The catalysed reaction is (6R)-5,10-methylene-5,6,7,8-tetrahydrofolate + NADP(+) = (6R)-5,10-methenyltetrahydrofolate + NADPH. It carries out the reaction (6R)-5,10-methenyltetrahydrofolate + H2O = (6R)-10-formyltetrahydrofolate + H(+). It participates in one-carbon metabolism; tetrahydrofolate interconversion. Functionally, catalyzes the oxidation of 5,10-methylenetetrahydrofolate to 5,10-methenyltetrahydrofolate and then the hydrolysis of 5,10-methenyltetrahydrofolate to 10-formyltetrahydrofolate. This chain is Bifunctional protein FolD, found in Leptospira biflexa serovar Patoc (strain Patoc 1 / Ames).